We begin with the raw amino-acid sequence, 360 residues long: Ribosomal RNA large subunit methyltransferase F (360 aa).

A disordered region spans residues 1–36; it reads MSKLISKQGKRPALSQSGLAKPSTSKKSSASKNANT. Positions 23-36 are enriched in low complexity; the sequence is STSKKSSASKNANT.

It belongs to the methyltransferase superfamily. METTL16/RlmF family.

It is found in the cytoplasm. The catalysed reaction is adenosine(1618) in 23S rRNA + S-adenosyl-L-methionine = N(6)-methyladenosine(1618) in 23S rRNA + S-adenosyl-L-homocysteine + H(+). Its function is as follows. Specifically methylates the adenine in position 1618 of 23S rRNA. The sequence is that of Ribosomal RNA large subunit methyltransferase F from Shewanella denitrificans (strain OS217 / ATCC BAA-1090 / DSM 15013).